A 629-amino-acid chain; its full sequence is DNA-directed RNA polymerase III subunit rpc3 (629 aa).

Disordered stretches follow at residues Ala136–Gln164, Pro247–Tyr294, and Gln373–Asn420. Residues Arg257–Thr268 show a composition bias toward basic and acidic residues. Acidic residues predominate over residues Ser272–Gly293. Residues Leu374–Pro388 show a composition bias toward polar residues. Basic and acidic residues predominate over residues Asp389–Ala409. A leucine-zipper region spans residues Thr556–Phe577.

The protein belongs to the RNA polymerase beta chain family. In terms of assembly, component of the RNA polymerase III (Pol III) complex consisting of 17 subunits.

It localises to the nucleus. Its function is as follows. DNA-dependent RNA polymerase catalyzes the transcription of DNA into RNA using the four ribonucleoside triphosphates as substrates. Specific core component of RNA polymerase III which synthesizes small RNAs, such as 5S rRNA and tRNAs. In Aspergillus fumigatus (strain ATCC MYA-4609 / CBS 101355 / FGSC A1100 / Af293) (Neosartorya fumigata), this protein is DNA-directed RNA polymerase III subunit rpc3 (rpc82).